A 238-amino-acid polypeptide reads, in one-letter code: MPINIRRATINDIICMQNANLHNLPENYMMKYYMYHILSWPEASFVATTTTLDCEDSDEQDENDKLELTLDGTNDGRTIKLDPTYLAPGEKLVGYVLVKMNDDPDQQNEPPNGHITSLSVMRTYRRMGIAENLMRQALFALREVHQAEYVSLHVRQSNRAALHLYRDTLAFEVLSIEKSYYQDGEDAYAMKKVLKLEELQISNFTHRRLKENEEKLEDDLESDLLEDIIKQGVNDIIV.

The 161-residue stretch at 35–195 (YHILSWPEAS…DAYAMKKVLK (161 aa)) folds into the N-acetyltransferase domain.

It belongs to the acetyltransferase family. ARD1 subfamily. Component of the N-terminal acetyltransferase A (NatA) complex, which is composed of ARD1, NAT1 and NAT5. Can self-associate.

It is found in the cytoplasm. The enzyme catalyses N-terminal glycyl-[protein] + acetyl-CoA = N-terminal N(alpha)-acetylglycyl-[protein] + CoA + H(+). It carries out the reaction N-terminal L-alanyl-[protein] + acetyl-CoA = N-terminal N(alpha)-acetyl-L-alanyl-[protein] + CoA + H(+). It catalyses the reaction N-terminal L-seryl-[protein] + acetyl-CoA = N-terminal N(alpha)-acetyl-L-seryl-[protein] + CoA + H(+). The catalysed reaction is N-terminal L-valyl-[protein] + acetyl-CoA = N-terminal N(alpha)-acetyl-L-valyl-[protein] + CoA + H(+). The enzyme catalyses N-terminal L-cysteinyl-[protein] + acetyl-CoA = N-terminal N(alpha)-acetyl-L-cysteinyl-[protein] + CoA + H(+). It carries out the reaction N-terminal L-threonyl-[protein] + acetyl-CoA = N-terminal N(alpha)-acetyl-L-threonyl-[protein] + CoA + H(+). Its function is as follows. Catalytic component of the NatA N-terminal acetyltransferase, which catalyzes acetylation of proteins beginning with Met-Ser, Met-Gly and Met-Ala. N-acetylation plays a role in normal eukaryotic translation and processing, protect against proteolytic degradation and protein turnover. The sequence is that of N-terminal acetyltransferase A complex catalytic subunit ARD1 (ARD1) from Saccharomyces cerevisiae (strain ATCC 204508 / S288c) (Baker's yeast).